Reading from the N-terminus, the 350-residue chain is Flap endonuclease 1 (350 aa).

The N-domain stretch occupies residues 1 to 101; that stretch reads MGVNIREVIP…LEIERRKRVK (101 aa). Mg(2+) contacts are provided by aspartate 30, aspartate 83, glutamate 155, glutamate 157, aspartate 176, aspartate 178, and aspartate 239. The segment at 119–261 is I-domain; that stretch reads AARRYAQMAA…TALKMVKAHR (143 aa). Positions 340–348 are interaction with PCNA; the sequence is QQMGLDAWL.

This sequence belongs to the XPG/RAD2 endonuclease family. FEN1 subfamily. As to quaternary structure, interacts with PCNA. PCNA stimulates the nuclease activity without altering cleavage specificity. Mg(2+) is required as a cofactor.

Structure-specific nuclease with 5'-flap endonuclease and 5'-3' exonuclease activities involved in DNA replication and repair. During DNA replication, cleaves the 5'-overhanging flap structure that is generated by displacement synthesis when DNA polymerase encounters the 5'-end of a downstream Okazaki fragment. Binds the unpaired 3'-DNA end and kinks the DNA to facilitate 5' cleavage specificity. Cleaves one nucleotide into the double-stranded DNA from the junction in flap DNA, leaving a nick for ligation. Also involved in the base excision repair (BER) pathway. Acts as a genome stabilization factor that prevents flaps from equilibrating into structures that lead to duplications and deletions. Also possesses 5'-3' exonuclease activity on nicked or gapped double-stranded DNA. The sequence is that of Flap endonuclease 1 from Hyperthermus butylicus (strain DSM 5456 / JCM 9403 / PLM1-5).